Here is a 152-residue protein sequence, read N- to C-terminus: Mitochondrial holo-[acyl-carrier-protein] synthase (152 aa).

This sequence belongs to the P-Pant transferase superfamily. AcpS family.

The protein resides in the mitochondrion. It carries out the reaction apo-[ACP] + CoA = holo-[ACP] + adenosine 3',5'-bisphosphate + H(+). Its function is as follows. Transfers the 4'-phosphopantetheine moiety from coenzyme A to a Ser of mitochondrial acyl-carrier-protein. In Candida glabrata (strain ATCC 2001 / BCRC 20586 / JCM 3761 / NBRC 0622 / NRRL Y-65 / CBS 138) (Yeast), this protein is Mitochondrial holo-[acyl-carrier-protein] synthase (PPT2).